Reading from the N-terminus, the 185-residue chain is Peptidyl-tRNA hydrolase (185 aa).

Tyr-14 provides a ligand contact to tRNA. Residue His-19 is the Proton acceptor of the active site. Residues Tyr-65, Asn-67, and Asn-113 each contribute to the tRNA site.

This sequence belongs to the PTH family. Monomer.

The protein localises to the cytoplasm. It carries out the reaction an N-acyl-L-alpha-aminoacyl-tRNA + H2O = an N-acyl-L-amino acid + a tRNA + H(+). Its function is as follows. Hydrolyzes ribosome-free peptidyl-tRNAs (with 1 or more amino acids incorporated), which drop off the ribosome during protein synthesis, or as a result of ribosome stalling. Catalyzes the release of premature peptidyl moieties from peptidyl-tRNA molecules trapped in stalled 50S ribosomal subunits, and thus maintains levels of free tRNAs and 50S ribosomes. The protein is Peptidyl-tRNA hydrolase of Rickettsia bellii (strain RML369-C).